Consider the following 240-residue polypeptide: Protein FANTASTIC FOUR 2 (240 aa).

Disordered stretches follow at residues 89–124 (TTPR…PPIK) and 177–229 (LLSH…KPML). Positions 117–171 (NSFPPPIKFVEDSKYNRMVRWLGEDGRIVVQAIRVSSPPSCFVSERGEGRLRLIL) constitute an FAF domain. Positions 184 to 200 (EEEEEETEEGIDEETSE) are enriched in acidic residues. Residues 207–216 (GNKKFSRFSR) are compositionally biased toward basic residues. The segment covering 217-226 (RCKENGREPK) has biased composition (basic and acidic residues).

This sequence belongs to the fantastic four family. In terms of tissue distribution, expressed in the shoot apex, stamens, carpels and young siliques. Detected in provascular and vascular tissue, and in the center of the vegetative and inflorescence meristems. Expressed in the funiculus. In roots and leaves, predominantly expressed in phloem.

In terms of biological role, regulates the size of the shoot meristem by modulating the CLV3-WUS feedback loop. Can repress WUS but is under negative control by CLV3. This chain is Protein FANTASTIC FOUR 2 (FAF2), found in Arabidopsis thaliana (Mouse-ear cress).